A 724-amino-acid polypeptide reads, in one-letter code: MAMLSQPNDGHDHPEKKDPDTTPKQVAGVISSQDPPHPAKDVAEERARTDWDLKEMHEFLEGDEAKSEQILRLYQSIERDPILQTRPEQFDYTQKQERELVANRINQMTKFLETEPYGKFRRRLQLMTVIDPSLGIRMLVNIGLFLNCVRGNGTQKQFDFWSNKKEAGIVKQLYGCFGMTELGHGSNVAGCETTATFDEKTDEFIIDTPHIGATKWWIGGAAHSATHTVCYARLIVKDVDYGVKTFIVPLRDSRHSLLPGIAIGDIGAKMGRQGVDNGWIQFTEVRVPRFFMLQRWCKVDRQGNVTLPPLEQLSYISLLEGRVGMATDSYRIGARYTTIALRYAVGRRQFSKKAGEPETKLIDYTLHQRRLLPYLALTYAAAVGTDRLERQHEELLANLDIALAKKDKLLLKNTITGTKSMFVDSGSLKSTLTWLAADLINETRQACGGHGYSSYNGFGKTYDDWVVQCTWEGDNNVLAMSAGKTIIKTVQQVLNGKELKDSTLEFLNAAPELSKAKKAVIRIRDHVDDVDRVLKAIAGLISKFSKDLIPISYQSWDSIGAQRVILSKLRCHYYLLETFNERLNDKIKAKSPARPHLENIIKLYYVTNILGPFIDEFLRFGVISPQVAKYITYEYPQKLCANIRPYVIGLTDSFQQPDNFINSLIGKYDGNIYTNYLESVKDVNDPSNYKAPYSEALEAMLNRSALENRERSERGKAAADILSK.

Positions 1–48 (MAMLSQPNDGHDHPEKKDPDTTPKQVAGVISSQDPPHPAKDVAEERAR) are disordered. Composition is skewed to basic and acidic residues over residues 9–21 (DGHDHPEKKDPDT) and 37–48 (HPAKDVAEERAR).

The protein belongs to the acyl-CoA oxidase family. Requires FAD as cofactor.

It localises to the peroxisome. It carries out the reaction a 2,3-saturated acyl-CoA + O2 = a (2E)-enoyl-CoA + H2O2. It functions in the pathway lipid metabolism; peroxisomal fatty acid beta-oxidation. The polypeptide is Acyl-coenzyme A oxidase 2 (POX2) (Candida tropicalis (Yeast)).